Here is a 348-residue protein sequence, read N- to C-terminus: Neutral peroxidase (348 aa).

Positions 1–20 are cleaved as a signal peptide; it reads MASFVARLTLALSFIALALA. The propeptide occupies 21-67; sequence GYSLVQNTLSSPTHTRLNLIPTWLDSTFDSADVLSYLGFGKSSGRLS. 4 disulfide bridges follow: Cys-71-Cys-149, Cys-102-Cys-107, Cys-156-Cys-344, and Cys-235-Cys-256. His-100 acts as the Proton acceptor in catalysis. Positions 101, 104, 106, and 108 each coordinate Ca(2+). 5 N-linked (GlcNAc...) asparagine glycosylation sites follow: Asn-114, Asn-118, Asn-173, Asn-177, and Asn-189. Position 198 (Pro-198) interacts with substrate. Residue Asn-203 is glycosylated (N-linked (GlcNAc...) asparagine). His-228 is a heme b binding site. Thr-229 provides a ligand contact to Ca(2+). N-linked (GlcNAc...) asparagine glycosylation is found at Asn-247 and Asn-261. 3 residues coordinate Ca(2+): Asp-269, Ser-271, and Asp-276. N-linked (GlcNAc...) asparagine glycosylation is present at Asn-300.

This sequence belongs to the peroxidase family. Classical plant (class III) peroxidase subfamily. Ca(2+) is required as a cofactor. The cofactor is heme b. Highly expressed in suspension cultured cells. Weak expression also found in the stems of intact plants. No expression in leaf, tuberous root and non-tuberous root.

The protein localises to the secreted. The catalysed reaction is 2 a phenolic donor + H2O2 = 2 a phenolic radical donor + 2 H2O. Its function is as follows. Removal of H(2)O(2), oxidation of toxic reductants, biosynthesis and degradation of lignin, suberization, auxin catabolism, response to environmental stresses such as wounding, pathogen attack and oxidative stress. These functions might be dependent on each isozyme/isoform in each plant tissue. May contribute to protection against cold-induced oxidative stress. The chain is Neutral peroxidase from Ipomoea batatas (Sweet potato).